The primary structure comprises 299 residues: 4-hydroxy-3-methylbut-2-enyl diphosphate reductase (299 aa).

C12 is a [4Fe-4S] cluster binding site. (2E)-4-hydroxy-3-methylbut-2-enyl diphosphate is bound by residues H42 and H88. H42 and H88 together coordinate dimethylallyl diphosphate. The isopentenyl diphosphate site is built by H42 and H88. C110 contacts [4Fe-4S] cluster. H138 contacts (2E)-4-hydroxy-3-methylbut-2-enyl diphosphate. H138 is a dimethylallyl diphosphate binding site. H138 contributes to the isopentenyl diphosphate binding site. The active-site Proton donor is E140. T177 lines the (2E)-4-hydroxy-3-methylbut-2-enyl diphosphate pocket. C205 provides a ligand contact to [4Fe-4S] cluster. (2E)-4-hydroxy-3-methylbut-2-enyl diphosphate-binding residues include S233, N235, and S277. Residues S233, N235, and S277 each contribute to the dimethylallyl diphosphate site. 3 residues coordinate isopentenyl diphosphate: S233, N235, and S277.

Belongs to the IspH family. Requires [4Fe-4S] cluster as cofactor.

The enzyme catalyses isopentenyl diphosphate + 2 oxidized [2Fe-2S]-[ferredoxin] + H2O = (2E)-4-hydroxy-3-methylbut-2-enyl diphosphate + 2 reduced [2Fe-2S]-[ferredoxin] + 2 H(+). It carries out the reaction dimethylallyl diphosphate + 2 oxidized [2Fe-2S]-[ferredoxin] + H2O = (2E)-4-hydroxy-3-methylbut-2-enyl diphosphate + 2 reduced [2Fe-2S]-[ferredoxin] + 2 H(+). It functions in the pathway isoprenoid biosynthesis; dimethylallyl diphosphate biosynthesis; dimethylallyl diphosphate from (2E)-4-hydroxy-3-methylbutenyl diphosphate: step 1/1. The protein operates within isoprenoid biosynthesis; isopentenyl diphosphate biosynthesis via DXP pathway; isopentenyl diphosphate from 1-deoxy-D-xylulose 5-phosphate: step 6/6. Functionally, catalyzes the conversion of 1-hydroxy-2-methyl-2-(E)-butenyl 4-diphosphate (HMBPP) into a mixture of isopentenyl diphosphate (IPP) and dimethylallyl diphosphate (DMAPP). Acts in the terminal step of the DOXP/MEP pathway for isoprenoid precursor biosynthesis. The protein is 4-hydroxy-3-methylbut-2-enyl diphosphate reductase of Malacoplasma penetrans (strain HF-2) (Mycoplasma penetrans).